The sequence spans 496 residues: Cobyric acid synthase (496 aa).

Residues 257–447 (KINVAIILLK…MHGILDNPAV (191 aa)) form the GATase cobBQ-type domain. Residue Cys-338 is the Nucleophile of the active site. The active site involves His-439.

Belongs to the CobB/CobQ family. CobQ subfamily.

The protein operates within cofactor biosynthesis; adenosylcobalamin biosynthesis. Functionally, catalyzes amidations at positions B, D, E, and G on adenosylcobyrinic A,C-diamide. NH(2) groups are provided by glutamine, and one molecule of ATP is hydrogenolyzed for each amidation. The chain is Cobyric acid synthase from Parabacteroides distasonis (strain ATCC 8503 / DSM 20701 / CIP 104284 / JCM 5825 / NCTC 11152).